The sequence spans 300 residues: Fatty acid elongase 3 (300 aa).

3 helical membrane-spanning segments follow: residues 31-51 (VPAVAVVLYLILVLYVPENVM), 61-81 (FLNMLWNLLLTVFSICGAYYC), and 127-147 (IFFDGFVGLWVAAFVLSKIPE). The short motif at 165–169 (HWYHH) is the HxxHH motif element. H168 functions as the Nucleophile in the catalytic mechanism. A run of 4 helical transmembrane segments spans residues 170–190 (ATVMLFCWHAYAYTISSGLWF), 192–212 (TMNYCVHSIMYFYYFMCACGM), 219–239 (IAPLITMMQILQMVAGTLIVL), and 261–283 (MGLLMYVSYLFLFSQLYYRSYIS).

The protein belongs to the ELO family.

The protein localises to the endoplasmic reticulum membrane. It carries out the reaction an acyl-CoA + malonyl-CoA + H(+) = a 3-oxoacyl-CoA + CO2 + CoA. It participates in lipid metabolism; fatty acid biosynthesis. In terms of biological role, involved in the synthesis of fatty acids. Elongates C14 fatty acids to C18. Required for the maintenance of the global lipidome profile in this parasite. This chain is Fatty acid elongase 3, found in Trypanosoma cruzi (strain CL Brener).